Consider the following 274-residue polypeptide: MEALRQRIEAAFEARAEITPTTVEPSVRADVEKVIAMLDTGEARVAEKIDGQWHVHQWLKKAVLLSFRIFDNQVIDGAETKYFDKVPMKFADYDEARFRKEAIRVVPPAAVRKGSFIGKNTVLMPSYVNLGAYVDEGTMVDTWATVGSCAQIGKNVHLSGGVGIGGVLEPLQAGPTIIEDNCFIGARSEVVEGVIVEEGSVISMGVYIGQSTRIYDRETGEVHYGRVPAGSVVVAGNLPSKCGTYSLYAAIIVKKVDEKTRGKVGINELLRIVD.

Positions 104 and 141 each coordinate substrate.

It belongs to the transferase hexapeptide repeat family. Homotrimer.

Its subcellular location is the cytoplasm. The catalysed reaction is (S)-2,3,4,5-tetrahydrodipicolinate + succinyl-CoA + H2O = (S)-2-succinylamino-6-oxoheptanedioate + CoA. It participates in amino-acid biosynthesis; L-lysine biosynthesis via DAP pathway; LL-2,6-diaminopimelate from (S)-tetrahydrodipicolinate (succinylase route): step 1/3. The protein is 2,3,4,5-tetrahydropyridine-2,6-dicarboxylate N-succinyltransferase of Shewanella halifaxensis (strain HAW-EB4).